The following is a 214-amino-acid chain: Cell division protein B1 (214 aa).

Functionally, part of a cell division machinery. The sequence is that of Cell division protein B1 from Sulfolobus acidocaldarius (strain ATCC 33909 / DSM 639 / JCM 8929 / NBRC 15157 / NCIMB 11770).